A 597-amino-acid polypeptide reads, in one-letter code: Fructan 1-exohydrolase (597 aa).

A signal peptide spans 1–15; sequence MAQAWAFLLPVLVFG. D76 is an active-site residue. Residues N169, N237, and N249 are each glycosylated (N-linked (GlcNAc...) asparagine). An intrachain disulfide couples C447 to C493. N-linked (GlcNAc...) asparagine glycosylation is present at N568.

It belongs to the glycosyl hydrolase 32 family.

It carries out the reaction Hydrolysis of terminal, non-reducing (2-&gt;1)-linked beta-D-fructofuranose residues in fructans.. With respect to regulation, inhibited by sucrose. In terms of biological role, hydrolyzes inulin-type beta-(2,1)-fructans. May play a role as a beta-(2,1)-trimmer during graminan biosynthesis. This Triticum urartu (Red wild einkorn) protein is Fructan 1-exohydrolase.